Reading from the N-terminus, the 496-residue chain is Nectin 1a (496 aa).

The first 20 residues, 1-20, serve as a signal peptide directing secretion; sequence MMFINLLLRLMCVFLIGADG. Over 21–349 the chain is Extracellular; that stretch reads QMVQMESSKA…FQDQQQAGVV (329 aa). In terms of domain architecture, Ig-like V-type spans 34 to 138; the sequence is GSQVELPCQF…GNRENMVNLT (105 aa). A disulfide bond links Cys-41 and Cys-121. 2 N-linked (GlcNAc...) asparagine glycosylation sites follow: Asn-62 and Asn-136. 2 consecutive Ig-like C2-type domains span residues 143 to 238 and 243 to 330; these read PMIQ…VTLN and PEVI…VIVT. Cystine bridges form between Cys-168/Cys-222 and Cys-265/Cys-312. Asn-282 carries N-linked (GlcNAc...) asparagine glycosylation. A helical transmembrane segment spans residues 350–370; it reads IGGAVVCGTVLLAAVTLLVVF. At 371 to 496 the chain is on the cytoplasmic side; sequence LYRRRCMFKG…SVISKEEWYV (126 aa).

The protein belongs to the nectin family. As to quaternary structure, cis- and trans-homodimer. Can form trans-heterodimers. In terms of tissue distribution, expressed in the developing eye and nervous system.

It is found in the cell membrane. It localises to the cell junction. The protein localises to the adherens junction. Functionally, cell adhesion molecule that promotes cell-cell contacts and plays important roles in the development of the nervous system. Acts by forming homophilic or heterophilic trans-dimers. In Danio rerio (Zebrafish), this protein is Nectin 1a.